Here is a 1310-residue protein sequence, read N- to C-terminus: Multidrug resistance protein 4 (1310 aa).

5 consecutive transmembrane segments (helical) span residues 48-68 (WLDL…GVLT), 125-145 (MVCF…CFFV), 196-216 (KFGI…IGFA), 223-243 (LVIM…AVFA), and 299-319 (GLTV…AFSL). The ABC transmembrane type-1 1 domain maps to 55–368 (AVGIFGSIGC…IAIPLNIFAT (314 aa)). An N-linked (GlcNAc...) asparagine glycan is attached at Asn336. A helical membrane pass occupies residues 342–362 (VMIVFICVLIATQGLSIIAIP). The N-linked (GlcNAc...) asparagine glycan is linked to Asn402. The ABC transporter 1 domain maps to 403 to 642 (ITLEDVQFRY…KGTYYGLVKR (240 aa)). 438 to 445 (GASGCGKS) is an ATP binding site. Asn608 is a glycosylation site (N-linked (GlcNAc...) asparagine). 2 helical membrane passes run 721–741 (WFLS…FPFF) and 773–793 (IIVV…IGLF). The ABC transmembrane type-1 2 domain occupies 722 to 1030 (FLSTFGFIGG…LGNIVPDIGK (309 aa)). Asn816 is a glycosylation site (N-linked (GlcNAc...) asparagine). Helical transmembrane passes span 849-869 (VGNV…AFYY), 871-891 (WKVS…VFIN), and 945-965 (IGIY…TLLT). In terms of domain architecture, ABC transporter 2 spans 1065–1304 (IEFKDICFRY…KGFYYTLAMQ (240 aa)). Residue 1100–1107 (GASGCGKS) coordinates ATP.

This sequence belongs to the ABC transporter superfamily. ABCB family. Multidrug resistance exporter (TC 3.A.1.201) subfamily.

It localises to the membrane. It carries out the reaction ATP + H2O + xenobioticSide 1 = ADP + phosphate + xenobioticSide 2.. Its function is as follows. Energy-dependent efflux pump responsible for decreased drug accumulation in multidrug resistance parasites. In Entamoeba histolytica (strain ATCC 30459 / HM-1:IMSS / ABRM), this protein is Multidrug resistance protein 4.